The sequence spans 78 residues: Toxin-like protein 10 (78 aa).

An N-terminal signal peptide occupies residues 1-23; that stretch reads MKATALLIAVFILFSVFGDMGYC.

Post-translationally, contains 4 disulfide bonds. Expressed by the venom gland.

It localises to the secreted. This Urodacus yaschenkoi (Inland robust scorpion) protein is Toxin-like protein 10.